A 234-amino-acid polypeptide reads, in one-letter code: Interleukin-34 (234 aa).

An N-terminal signal peptide occupies residues 1–20 (MPQGLAWLRYLGILLGMALG). N-linked (GlcNAc...) asparagine glycosylation is present at asparagine 76. The segment at 191-234 (EAPQPQPRSPASAQCEAAQLYPLPQPPSTSLPRVLGPSAGPPTQ) is disordered.

It belongs to the IL-34 family. In terms of assembly, homodimer. Interacts with CSF1R.

The protein resides in the secreted. Its function is as follows. Cytokine that promotes the proliferation, survival and differentiation of monocytes and macrophages. Promotes the release of pro-inflammatory chemokines, and thereby plays an important role in innate immunity and in inflammatory processes. Plays an important role in the regulation of osteoclast proliferation and differentiation, and in the regulation of bone resorption. Signaling via CSF1R and its downstream effectors stimulates phosphorylation of MAPK1/ERK2 AND MAPK3/ERK1. The polypeptide is Interleukin-34 (Bos taurus (Bovine)).